A 369-amino-acid polypeptide reads, in one-letter code: Putative F-box protein At1g70960 (369 aa).

Positions asparagine 3 to methionine 54 constitute an F-box domain.

The polypeptide is Putative F-box protein At1g70960 (Arabidopsis thaliana (Mouse-ear cress)).